Consider the following 288-residue polypeptide: Proline iminopeptidase (288 aa).

Residues 27 to 274 (PVIVLHGGPG…SAHMPYIEEP (248 aa)) form the AB hydrolase-1 domain. S101 serves as the catalytic Nucleophile. Residue D240 is part of the active site. H267 functions as the Proton donor in the catalytic mechanism.

This sequence belongs to the peptidase S33 family. In terms of assembly, monomer.

It localises to the cytoplasm. It carries out the reaction Release of N-terminal proline from a peptide.. Its activity is regulated as follows. Completely inhibited by p-chloromercuribenzoate (PCMB) and heavy metal salts. Partially inhibited by proline and proline derivatives with proline as the amino terminus. Enzyme inactivated by PCMB is reactivated by incubation with 2-mercaptoethanol. Its function is as follows. Releases the N-terminal proline from various substrates including at least dipeptides Pro-Pro, Pro-Gln, Pro-Trp and Pro-Tyr. Also acts on amides (Pro-beta NA) and oligopeptides including Pro-Leu-GlyNH2, Pro-Leu-Gly, Pro-Phe-Gly-Lys, Pro-Pro-Ala-OBut and Pro-Pro-Gly-(Pro-Pro-Gly)(4). Higher activity toward small peptides (up to three residues), but very low activity for longer peptides. Has no activity against p-nitrophenyl acetate, poly_L-proline, Met-Pro or amino acyl amides other than Pro-betaNA (Pyr-betaNA, Phe-betaNA, Cys-betaNA, Met-betaNA, Leu-betaNA, Ala-betaNA and Z-Gly-Pro-betaNA). The sequence is that of Proline iminopeptidase (pip) from Heyndrickxia coagulans (Weizmannia coagulans).